The chain runs to 151 residues: MTLERTFVAIKPDGVQRGLIAEILGRFETKGFKLVGLKQLTPSKELAEKHYGVHKDRPFFSGLVDFITSGPVVAMVWEGEGVIASARKLIGATKPLEAEPGTIRGDLAVNIGRNVIHGSDGSDTAVFEINLWFQENELVDWNPSDQAWRVE.

ATP contacts are provided by lysine 11, phenylalanine 59, arginine 87, threonine 93, arginine 104, and asparagine 114. The active-site Pros-phosphohistidine intermediate is the histidine 117.

The protein belongs to the NDK family. In terms of assembly, homotetramer. Mg(2+) serves as cofactor.

Its subcellular location is the cytoplasm. It catalyses the reaction a 2'-deoxyribonucleoside 5'-diphosphate + ATP = a 2'-deoxyribonucleoside 5'-triphosphate + ADP. The catalysed reaction is a ribonucleoside 5'-diphosphate + ATP = a ribonucleoside 5'-triphosphate + ADP. Its function is as follows. Major role in the synthesis of nucleoside triphosphates other than ATP. The ATP gamma phosphate is transferred to the NDP beta phosphate via a ping-pong mechanism, using a phosphorylated active-site intermediate. The chain is Nucleoside diphosphate kinase from Prochlorococcus marinus (strain NATL1A).